The sequence spans 365 residues: Alanine racemase (365 aa).

Lys35 acts as the Proton acceptor; specific for D-alanine in catalysis. Lys35 is modified (N6-(pyridoxal phosphate)lysine). Arg130 provides a ligand contact to substrate. The active-site Proton acceptor; specific for L-alanine is Tyr256. Met304 is a substrate binding site.

It belongs to the alanine racemase family. Pyridoxal 5'-phosphate is required as a cofactor.

It carries out the reaction L-alanine = D-alanine. It functions in the pathway amino-acid biosynthesis; D-alanine biosynthesis; D-alanine from L-alanine: step 1/1. In terms of biological role, catalyzes the interconversion of L-alanine and D-alanine. May also act on other amino acids. In Acidovorax sp. (strain JS42), this protein is Alanine racemase (alr).